The following is a 390-amino-acid chain: Putative 2-isopropylmalate synthase (390 aa).

Positions 5-267 constitute a Pyruvate carboxyltransferase domain; sequence IIIFDTTLRD…KTNIKYQEIY (263 aa). Mn(2+)-binding residues include Asp-14, His-202, His-204, and Asn-238.

This sequence belongs to the alpha-IPM synthase/homocitrate synthase family. LeuA type 1 subfamily. As to quaternary structure, homodimer. Mn(2+) serves as cofactor.

Its subcellular location is the cytoplasm. It carries out the reaction 3-methyl-2-oxobutanoate + acetyl-CoA + H2O = (2S)-2-isopropylmalate + CoA + H(+). It participates in amino-acid biosynthesis; L-leucine biosynthesis; L-leucine from 3-methyl-2-oxobutanoate: step 1/4. Its function is as follows. Catalyzes the condensation of the acetyl group of acetyl-CoA with 3-methyl-2-oxobutanoate (2-ketoisovalerate) to form 3-carboxy-3-hydroxy-4-methylpentanoate (2-isopropylmalate). In Buchnera aphidicola subsp. Baizongia pistaciae (strain Bp), this protein is Putative 2-isopropylmalate synthase.